Reading from the N-terminus, the 206-residue chain is Small ribosomal subunit protein uS4 (206 aa).

Positions 96–158 (SRLDNVVYRM…AKGQLRIKGA (63 aa)) constitute an S4 RNA-binding domain.

It belongs to the universal ribosomal protein uS4 family. In terms of assembly, part of the 30S ribosomal subunit. Contacts protein S5. The interaction surface between S4 and S5 is involved in control of translational fidelity.

Its function is as follows. One of the primary rRNA binding proteins, it binds directly to 16S rRNA where it nucleates assembly of the body of the 30S subunit. Functionally, with S5 and S12 plays an important role in translational accuracy. This chain is Small ribosomal subunit protein uS4, found in Coxiella burnetii (strain CbuG_Q212) (Coxiella burnetii (strain Q212)).